The following is a 444-amino-acid chain: Exodeoxyribonuclease 7 large subunit (444 aa).

Belongs to the XseA family. Heterooligomer composed of large and small subunits.

The protein resides in the cytoplasm. It carries out the reaction Exonucleolytic cleavage in either 5'- to 3'- or 3'- to 5'-direction to yield nucleoside 5'-phosphates.. Functionally, bidirectionally degrades single-stranded DNA into large acid-insoluble oligonucleotides, which are then degraded further into small acid-soluble oligonucleotides. This chain is Exodeoxyribonuclease 7 large subunit, found in Rickettsia akari (strain Hartford).